A 900-amino-acid polypeptide reads, in one-letter code: Nonribosomal peptide synthetase AMT10 (900 aa).

Residues 284-686 are adenylation; that stretch reads KQAQQNPAAM…ARRNGYIKLR (403 aa). The Carrier domain maps to 824–900; sequence ELQSDMERYL…QMARNCSLLD (77 aa). S861 bears the O-(pantetheine 4'-phosphoryl)serine mark.

The protein belongs to the NRP synthetase family.

It functions in the pathway mycotoxin biosynthesis. In terms of biological role, nonribosomal peptide synthetase; part of the gene clusters that mediate the biosynthesis of AM-toxins, host-selective toxins (HSTs) causing Alternaria blotch on apple, a worldwide distributed disease. AM-toxins are cyclic depsipeptides containing the 3 residues 2-hydroxy-isovaleric acid (2-HIV), dehydroalanine, L-alanine which are common for all 3 AM-toxins I to III. The fourth precursor is L-alpha-amino-methoxyphenyl-valeric acid (L-Amv) for AM-toxin I, L-alpha-amino-phenyl-valeric acid (L-Apv) for AM-toxin II, and L-alpha-amino-hydroxyphenyl-valeric acid (L-Ahv) for AM-toxin III. AM-toxins have two target sites for affecting susceptible apple cells; they cause invagination of the plasma membrane and electrolyte loss and chloroplast disorganization. The non-ribosomal peptide synthetase AMT1 contains 4 catalytic modules and is responsible for activation of each residue in AM-toxin. The aldo-keto reductase AMT2 catalyzes the conversion of 2-keto-isovaleric acid (2-KIV) to 2-hydroxy-isovaleric acid (2-HIV), one of the precursor residues incorporated by AMT1 during AM-toxin biosynthesis, by reduction of its ketone to an alcohol. The cytochrome P450 monooxygenase AMT3 and the thioesterase AMT4 are also important for AM-toxin production, but their exact function within the AM-toxin biosynthesis are not known yet. Up to 21 proteins (including AMT1 to AMT4) are predicted to be involved in AM-toxin biosynthesis since their expression ishighly up-regulated in AM-toxin-producing cultures. The polypeptide is Nonribosomal peptide synthetase AMT10 (Alternaria alternata (Alternaria rot fungus)).